A 318-amino-acid polypeptide reads, in one-letter code: Pantothenate kinase (318 aa).

96–103 (GSVAVGKS) is a binding site for ATP.

The protein belongs to the prokaryotic pantothenate kinase family.

The protein resides in the cytoplasm. The catalysed reaction is (R)-pantothenate + ATP = (R)-4'-phosphopantothenate + ADP + H(+). It functions in the pathway cofactor biosynthesis; coenzyme A biosynthesis; CoA from (R)-pantothenate: step 1/5. This is Pantothenate kinase from Rhodopseudomonas palustris (strain ATCC BAA-98 / CGA009).